The primary structure comprises 239 residues: SH3 domain-binding glutamic acid-rich protein (239 aa).

The SH3-binding signature appears at 124–130 (NGIPLPP). The disordered stretch occupies residues 159–239 (GLAPPPDSKG…GEEPGEDEDS (81 aa)). Basic and acidic residues predominate over residues 167-185 (KGSEKAEEGGETEAQKEGS). The span at 198 to 239 (NEEEGETATEETEEIAMEGAEGEAEEEEETAEGEEPGEDEDS) shows a compositional bias: acidic residues.

This sequence belongs to the SH3BGR family. In terms of tissue distribution, expressed in heart and skeletal muscle.

This is SH3 domain-binding glutamic acid-rich protein (SH3BGR) from Homo sapiens (Human).